Reading from the N-terminus, the 312-residue chain is tRNA pseudouridine synthase B (312 aa).

The active-site Nucleophile is the aspartate 49.

This sequence belongs to the pseudouridine synthase TruB family. Type 1 subfamily.

The catalysed reaction is uridine(55) in tRNA = pseudouridine(55) in tRNA. Its function is as follows. Responsible for synthesis of pseudouridine from uracil-55 in the psi GC loop of transfer RNAs. This Chelativorans sp. (strain BNC1) protein is tRNA pseudouridine synthase B.